The following is a 336-amino-acid chain: Ketol-acid reductoisomerase (NADP(+)) (336 aa).

Positions 3-183 constitute a KARI N-terminal Rossmann domain; the sequence is ATMYYDRDVS…GGTRAGVLET (181 aa). Residues 26-29, Arg49, Ser52, Ser54, and 84-87 each bind NADP(+); these read YGSQ and DETQ. His109 is an active-site residue. Gly135 is a binding site for NADP(+). One can recognise a KARI C-terminal knotted domain in the interval 184 to 329; that stretch reads TFKEETETDL…RELRSKMPFI (146 aa). Mg(2+) contacts are provided by Asp192, Glu196, Glu228, and Glu232. Ser253 provides a ligand contact to substrate.

It belongs to the ketol-acid reductoisomerase family. It depends on Mg(2+) as a cofactor.

The enzyme catalyses (2R)-2,3-dihydroxy-3-methylbutanoate + NADP(+) = (2S)-2-acetolactate + NADPH + H(+). It catalyses the reaction (2R,3R)-2,3-dihydroxy-3-methylpentanoate + NADP(+) = (S)-2-ethyl-2-hydroxy-3-oxobutanoate + NADPH + H(+). The protein operates within amino-acid biosynthesis; L-isoleucine biosynthesis; L-isoleucine from 2-oxobutanoate: step 2/4. It participates in amino-acid biosynthesis; L-valine biosynthesis; L-valine from pyruvate: step 2/4. Its function is as follows. Involved in the biosynthesis of branched-chain amino acids (BCAA). Catalyzes an alkyl-migration followed by a ketol-acid reduction of (S)-2-acetolactate (S2AL) to yield (R)-2,3-dihydroxy-isovalerate. In the isomerase reaction, S2AL is rearranged via a Mg-dependent methyl migration to produce 3-hydroxy-3-methyl-2-ketobutyrate (HMKB). In the reductase reaction, this 2-ketoacid undergoes a metal-dependent reduction by NADPH to yield (R)-2,3-dihydroxy-isovalerate. In Deinococcus geothermalis (strain DSM 11300 / CIP 105573 / AG-3a), this protein is Ketol-acid reductoisomerase (NADP(+)).